The chain runs to 807 residues: Ribosome-releasing factor 2, mitochondrial (807 aa).

Residues 1-18 (MFCRKYVFQTWKQLSRSY) constitute a mitochondrion transit peptide. The tr-type G domain occupies 27–315 (AKTRNIGIIA…GITKYLPSPL (289 aa)). Residues 36-43 (AHIDAGKT), 100-104 (DTPGH), and 154-157 (NKMD) each bind GTP.

It belongs to the TRAFAC class translation factor GTPase superfamily. Classic translation factor GTPase family. EF-G/EF-2 subfamily.

It localises to the mitochondrion. Mitochondrial GTPase that mediates the disassembly of ribosomes from messenger RNA at the termination of mitochondrial protein biosynthesis. Not involved in the GTP-dependent ribosomal translocation step during translation elongation. The polypeptide is Ribosome-releasing factor 2, mitochondrial (Candida albicans (strain SC5314 / ATCC MYA-2876) (Yeast)).